The primary structure comprises 591 residues: DNA ligase (591 aa).

Residues 38 to 42, 87 to 88, and Glu-119 contribute to the NAD(+) site; these read DEKYD and SL. The N6-AMP-lysine intermediate role is filled by Lys-121. NAD(+) is bound by residues Arg-142, Glu-181, Lys-298, and Lys-322. Residues Cys-415, Cys-418, Cys-433, and Cys-439 each contribute to the Zn(2+) site.

Belongs to the NAD-dependent DNA ligase family. LigA subfamily. Mg(2+) is required as a cofactor. It depends on Mn(2+) as a cofactor.

The catalysed reaction is NAD(+) + (deoxyribonucleotide)n-3'-hydroxyl + 5'-phospho-(deoxyribonucleotide)m = (deoxyribonucleotide)n+m + AMP + beta-nicotinamide D-nucleotide.. Functionally, DNA ligase that catalyzes the formation of phosphodiester linkages between 5'-phosphoryl and 3'-hydroxyl groups in double-stranded DNA using NAD as a coenzyme and as the energy source for the reaction. It is essential for DNA replication and repair of damaged DNA. The chain is DNA ligase from Wigglesworthia glossinidia brevipalpis.